Consider the following 579-residue polypeptide: Membrane frizzled-related protein (579 aa).

The Cytoplasmic segment spans residues 1-69; the sequence is MKDFSDVILC…RPDCRFSWLC (69 aa). The helical; Signal-anchor for type II membrane protein transmembrane segment at 70 to 90 threads the bilayer; that stretch reads VLLLSSLLLLLLGLLVAIILA. Over 91–579 the chain is Extracellular; the sequence is QLQAAPPSGA…AADLEACAQP (489 aa). The disordered stretch occupies residues 100 to 143; the sequence is ASHSPLPAGGLTTTTTTPTITTSQAAGTPKGQQESGVSPSPQST. Residues 111 to 121 are compositionally biased toward low complexity; that stretch reads TTTTTTPTITT. The segment covering 122–143 has biased composition (polar residues); that stretch reads SQAAGTPKGQQESGVSPSPQST. Disulfide bonds link Cys144–Cys170 and Cys197–Cys216. The CUB 1 domain occupies 144 to 253; it reads CGGLLSGPRG…FGFHAWYQAM (110 aa). The N-linked (GlcNAc...) asparagine glycan is linked to Asn227. The LDL-receptor class A 1 domain occupies 259–295; sequence SCAHDEFRCDQLICLLPDSVCDGFANCADGSDETNCS. 5 disulfide bridges follow: Cys260-Cys272, Cys267-Cys285, Cys279-Cys294, Cys301-Cys327, and Cys354-Cys377. The region spanning 301 to 414 is the CUB 2 domain; that stretch reads CGGNLTGLQG…GGFSATYLAF (114 aa). N-linked (GlcNAc...) asparagine glycosylation is present at Asn415. The 36-residue stretch at 420-455 folds into the LDL-receptor class A 2 domain; sequence PCGPSELSCQAGGCKGVQWMCDMWRDCTDGSDDNCS. 8 disulfides stabilise this stretch: Cys421-Cys433, Cys428-Cys446, Cys440-Cys454, Cys466-Cys528, Cys474-Cys521, Cys512-Cys549, Cys538-Cys576, and Cys542-Cys564. Residues 461 to 579 form the FZ domain; sequence PPELACEPVQ…AADLEACAQP (119 aa).

As to quaternary structure, interacts with C1QTNF5. As to expression, specifically expressed in brain. Strongly expressed in medulla oblongata and to a lower extent in hippocampus and corpus callosum. Expressed in keratinocytes.

It is found in the apical cell membrane. Its function is as follows. May play a role in eye development. This is Membrane frizzled-related protein (MFRP) from Homo sapiens (Human).